Reading from the N-terminus, the 214-residue chain is MQNLIVAVVAYLIGSVSFAVIVSAAMGLDDPRSYGSGNPGATNVLRSGSKKAAILTLIGDAFKGWLPVWFVVHFGARYGLDDTSVAIAAVAVFLGHLYPAFFRFKGGKGVATAAGVLLAINPILGVATLLTWLIVAFFTRYSSLAALAAAVFAPIFDGFLFGPHIIALAIVVMSSLLVWRHRGNIAKLMRGQESRIGDRKKADAAAKPTAGSDV.

5 helical membrane-spanning segments follow: residues Leu-4 to Ala-24, Ala-52 to Val-72, Asp-82 to Phe-102, Leu-118 to Phe-138, and Phe-159 to Trp-179.

It belongs to the PlsY family. In terms of assembly, probably interacts with PlsX.

It localises to the cell inner membrane. The enzyme catalyses an acyl phosphate + sn-glycerol 3-phosphate = a 1-acyl-sn-glycero-3-phosphate + phosphate. It participates in lipid metabolism; phospholipid metabolism. Its function is as follows. Catalyzes the transfer of an acyl group from acyl-phosphate (acyl-PO(4)) to glycerol-3-phosphate (G3P) to form lysophosphatidic acid (LPA). This enzyme utilizes acyl-phosphate as fatty acyl donor, but not acyl-CoA or acyl-ACP. The sequence is that of Glycerol-3-phosphate acyltransferase from Paraburkholderia xenovorans (strain LB400).